The following is a 129-amino-acid chain: Large ribosomal subunit protein bL12 (129 aa).

Belongs to the bacterial ribosomal protein bL12 family. Homodimer. Part of the ribosomal stalk of the 50S ribosomal subunit. Forms a multimeric L10(L12)X complex, where L10 forms an elongated spine to which 2 to 4 L12 dimers bind in a sequential fashion. Binds GTP-bound translation factors.

Forms part of the ribosomal stalk which helps the ribosome interact with GTP-bound translation factors. Is thus essential for accurate translation. This Mycobacteroides abscessus (strain ATCC 19977 / DSM 44196 / CCUG 20993 / CIP 104536 / JCM 13569 / NCTC 13031 / TMC 1543 / L948) (Mycobacterium abscessus) protein is Large ribosomal subunit protein bL12.